We begin with the raw amino-acid sequence, 320 residues long: Apolipoprotein E (320 aa).

Positions 1–18 (MKVLWAALLVAFLAGCQG) are cleaved as a signal peptide. Tandem repeats lie at residues 82–103 (ALME…EQLS), 104–125 (PVAE…ARLG), 126–147 (ADME…AMLG), 148–169 (QSTD…KRLL), 170–191 (RDVD…EGAE), 192–213 (RGVS…ARAA), 214–236 (TVGS…ERLR), and 237–258 (ARME…EQVE). The 8 X 22 AA approximate tandem repeats stretch occupies residues 82–258 (ALMEETMKEL…RLDEVKEQVE (177 aa)). Methionine 145 bears the Methionine sulfoxide mark. A Phosphoserine modification is found at serine 149. Residues 160 to 170 (HLRKLRKRLLR) form an LDL and other lipoprotein receptors binding region. A heparin-binding site is contributed by 164–167 (LRKR). The tract at residues 212–293 (AATVGSSLAS…SWFEPLVEDM (82 aa)) is lipid-binding and lipoprotein association. O-linked (GalNAc...) threonine glycosylation occurs at threonine 214. Residue 232-239 (GERLRARM) participates in heparin binding. The homooligomerization stretch occupies residues 269–320 (QQMRLQAEAFQARLKSWFEPLVEDMQRQWAGLVEKVQAAVGASTTPVPSDNH). Residues 281-293 (RLKSWFEPLVEDM) are specificity for association with VLDL.

It belongs to the apolipoprotein A1/A4/E family. In terms of assembly, homotetramer. May interact with ABCA1; functionally associated with ABCA1 in the biogenesis of HDLs. May interact with APP/A4 amyloid-beta peptide; the interaction is extremely stable in vitro but its physiological significance is unclear. May interact with MAPT. May interact with MAP2. In the cerebrospinal fluid, interacts with secreted SORL1. Interacts with PMEL; this allows the loading of PMEL luminal fragment on ILVs to induce fibril nucleation. In terms of processing, APOE exists as multiple glycosylated and sialylated glycoforms within cells and in plasma. The extent of glycosylation and sialylation are tissue and context specific. Glycated in plasma VLDL. Post-translationally, phosphorylated by FAM20C in the extracellular medium.

The protein resides in the secreted. It is found in the extracellular space. It localises to the extracellular matrix. Its subcellular location is the extracellular vesicle. The protein localises to the endosome. The protein resides in the multivesicular body. Functionally, APOE is an apolipoprotein, a protein associating with lipid particles, that mainly functions in lipoprotein-mediated lipid transport between organs via the plasma and interstitial fluids. APOE is a core component of plasma lipoproteins and is involved in their production, conversion and clearance. Apolipoproteins are amphipathic molecules that interact both with lipids of the lipoprotein particle core and the aqueous environment of the plasma. As such, APOE associates with chylomicrons, chylomicron remnants, very low density lipoproteins (VLDL) and intermediate density lipoproteins (IDL) but shows a preferential binding to high-density lipoproteins (HDL). It also binds a wide range of cellular receptors including the LDL receptor/LDLR, the LDL receptor-related proteins LRP1, LRP2 and LRP8 and the very low-density lipoprotein receptor/VLDLR that mediate the cellular uptake of the APOE-containing lipoprotein particles. Finally, APOE also has a heparin-binding activity and binds heparan-sulfate proteoglycans on the surface of cells, a property that supports the capture and the receptor-mediated uptake of APOE-containing lipoproteins by cells. A main function of APOE is to mediate lipoprotein clearance through the uptake of chylomicrons, VLDLs, and HDLs by hepatocytes. APOE is also involved in the biosynthesis by the liver of VLDLs as well as their uptake by peripheral tissues ensuring the delivery of triglycerides and energy storage in muscle, heart and adipose tissues. By participating in the lipoprotein-mediated distribution of lipids among tissues, APOE plays a critical role in plasma and tissues lipid homeostasis. APOE is also involved in two steps of reverse cholesterol transport, the HDLs-mediated transport of cholesterol from peripheral tissues to the liver, and thereby plays an important role in cholesterol homeostasis. First, it is functionally associated with ABCA1 in the biogenesis of HDLs in tissues. Second, it is enriched in circulating HDLs and mediates their uptake by hepatocytes. APOE also plays an important role in lipid transport in the central nervous system, regulating neuron survival and sprouting. This chain is Apolipoprotein E (APOE), found in Cebus capucinus (White-faced sapajou).